The sequence spans 294 residues: Nucleotide-binding protein DICTH_1001 (294 aa).

ATP is bound at residue 10 to 17 (GLSGAGKS). Residue 61-64 (DIRT) participates in GTP binding.

It belongs to the RapZ-like family.

Displays ATPase and GTPase activities. The chain is Nucleotide-binding protein DICTH_1001 from Dictyoglomus thermophilum (strain ATCC 35947 / DSM 3960 / H-6-12).